Here is an 84-residue protein sequence, read N- to C-terminus: MMMNKNVLSSILFFMLIGSVLVESRPLGLTKTEEKFVASLFDGLSLGSIKDSGPSPGEGHKVVDRKDTFRFVKHSGPSPSGPGH.

The signal sequence occupies residues M1–S24. Positions K50 to H84 are disordered. Basic and acidic residues predominate over residues E58–R70. P77 and P79 each carry 4-hydroxyproline.

Post-translationally, contains 4-hydroxyproline; hydroxylated on Pro-77 and Pro-79.

It localises to the secreted. It is found in the extracellular space. Its subcellular location is the apoplast. Its function is as follows. Endogenous secreted peptide that acts as elicitor of immune response and positive regulator of defense response. Amplifies the immune response triggered by flg22, the active epitope of bacterial flagellin. Acts as a negative regulator of root growth. This chain is PAMP-induced secreted peptide 2, found in Arabidopsis thaliana (Mouse-ear cress).